Here is a 90-residue protein sequence, read N- to C-terminus: Progonadoliberin-3 (90 aa).

Positions 1 to 23 (MEAGSRVIMQVLLLALVVQVTLS) are cleaved as a signal peptide. Gln24 is subject to Pyrrolidone carboxylic acid. Residue Gly33 is modified to Glycine amide.

It belongs to the GnRH family. In terms of tissue distribution, expressed only in the terminal nerve nucleus of the telencephalon.

Its subcellular location is the secreted. Its function is as follows. Stimulates the secretion of gonadotropins. This chain is Progonadoliberin-3 (gnrh3), found in Haplochromis burtoni (Burton's mouthbrooder).